The primary structure comprises 284 residues: MVLMIVSGRSGSGKSVALRALEDMGFYCVDNLPVVLLPDLARTLAEREISAAVSIDVRNMPESPEIFEQAMTNLPEAFSPQLLFLDADRNTLIRRYSDTRRLHPLSSKNLSLESAIDKESDLLEPLRSRADLIVDTSEMSVHELAEMLRTRLLGKRERELTMVFESFGFKHGIPIDADYVFDVRFLPNPHWDPKLRPMTGLDKPVAAFLDRHTEVHNFIYQTRSYLELWLPMLETNNRSYLTVAIGCTGGKHRSVYIAEQLADYFRSRGKNVQSRHRTLEKRKT.

8–15 (GRSGSGKS) contributes to the ATP binding site. 56-59 (DVRN) serves as a coordination point for GTP. An RNA-binding region spans residues 266–284 (RSRGKNVQSRHRTLEKRKT).

Belongs to the RapZ-like family. RapZ subfamily. As to quaternary structure, homotrimer.

Functionally, modulates the synthesis of GlmS, by affecting the processing and stability of the regulatory small RNA GlmZ. When glucosamine-6-phosphate (GlcN6P) concentrations are high in the cell, RapZ binds GlmZ and targets it to cleavage by RNase E. Consequently, GlmZ is inactivated and unable to activate GlmS synthesis. Under low GlcN6P concentrations, RapZ is sequestered and inactivated by an other regulatory small RNA, GlmY, preventing GlmZ degradation and leading to synthesis of GlmS. This chain is RNase adapter protein RapZ, found in Escherichia fergusonii (strain ATCC 35469 / DSM 13698 / CCUG 18766 / IAM 14443 / JCM 21226 / LMG 7866 / NBRC 102419 / NCTC 12128 / CDC 0568-73).